A 609-amino-acid chain; its full sequence is Phosphoenolpyruvate carboxykinase [GTP] (609 aa).

Substrate-binding positions include Arg-81 and Tyr-220–Gly-222. The Mn(2+) site is built by Lys-229 and His-249. Ser-271 serves as a coordination point for substrate. A GTP-binding site is contributed by Ala-272 to Asn-277. Cys-273 is a catalytic residue. Residue Asp-296 participates in Mn(2+) binding. Asn-387–Arg-389 is a substrate binding site. Residues Arg-389, Arg-420, and Phe-515–Asn-518 each bind GTP.

It belongs to the phosphoenolpyruvate carboxykinase [GTP] family. As to quaternary structure, monomer. Requires Mn(2+) as cofactor.

It localises to the cytoplasm. The enzyme catalyses oxaloacetate + GTP = phosphoenolpyruvate + GDP + CO2. Its pathway is carbohydrate biosynthesis; gluconeogenesis. Catalyzes the conversion of oxaloacetate (OAA) to phosphoenolpyruvate (PEP), the rate-limiting step in the metabolic pathway that produces glucose from lactate and other precursors derived from the citric acid cycle. This chain is Phosphoenolpyruvate carboxykinase [GTP], found in Mycobacterium marinum (strain ATCC BAA-535 / M).